Reading from the N-terminus, the 251-residue chain is Capsid protein (251 aa).

The Bipartite nuclear localization signal signature appears at lysine 3–threonine 20. A Nuclear localization signal motif is present at residues arginine 35–arginine 49. The segment at cysteine 63 to histidine 80 is a zinc-finger region. The Nuclear export signal motif lies at isoleucine 96 to methionine 117. Residues arginine 195–arginine 242 carry the Bipartite nuclear localization signal motif.

It belongs to the geminiviridae capsid protein family. As to quaternary structure, homomultimer. Binds to single-stranded and double-stranded viral DNA. Interacts (via nuclear localization signals) with host importin alpha-1a.

The protein localises to the virion. Its subcellular location is the host nucleus. Encapsidates the viral DNA into characteristic twinned ('geminate') particles. Binds the genomic viral ssDNA and shuttles it into and out of the cell nucleus. The CP of bipartite geminiviruses is not required for cell-to-cell or systemic movement. The polypeptide is Capsid protein (Capsicum annuum (Capsicum pepper)).